The following is a 148-amino-acid chain: uncharacterized protein (148 aa).

One can recognise an N-acetyltransferase domain in the interval 8–148; the sequence is QVMQEPELKI…DGFLTLILRN (141 aa).

It belongs to the acetyltransferase family.

This is an uncharacterized protein from Bacillus subtilis (strain 168).